An 85-amino-acid chain; its full sequence is MTLKQRYQQAGKEASWALSLSILYVIGWCLCAYLPKETQGPIGFPLWFELSCIYLPILFIVIGHWIIKIIFQDISLEINDQGNQK.

A run of 2 helical transmembrane segments spans residues 16–34 and 50–71; these read WALSLSILYVIGWCLCAYL and LSCIYLPILFIVIGHWIIKIIF.

The protein to E.coli YhdT.

The protein resides in the cell membrane. This is an uncharacterized protein from Haemophilus influenzae (strain ATCC 51907 / DSM 11121 / KW20 / Rd).